A 344-amino-acid chain; its full sequence is Selenide, water dikinase (344 aa).

Cys16 is a catalytic residue. ATP contacts are provided by residues Lys19 and 47–49 (SRD). Asp50 contacts Mg(2+). Residues Asp67, Asp90, and 138–140 (GHS) each bind ATP. Asp90 contributes to the Mg(2+) binding site. Asp226 is a Mg(2+) binding site.

This sequence belongs to the selenophosphate synthase 1 family. Class I subfamily. As to quaternary structure, homodimer. It depends on Mg(2+) as a cofactor.

It catalyses the reaction hydrogenselenide + ATP + H2O = selenophosphate + AMP + phosphate + 2 H(+). Its function is as follows. Synthesizes selenophosphate from selenide and ATP. The protein is Selenide, water dikinase of Bordetella bronchiseptica (strain ATCC BAA-588 / NCTC 13252 / RB50) (Alcaligenes bronchisepticus).